We begin with the raw amino-acid sequence, 250 residues long: Acyl-coenzyme A diphosphatase fit1 (250 aa).

At 1-23 the chain is on the cytoplasmic side; the sequence is MTEKTASHYWNEETSILKLRRKD. A helical membrane pass occupies residues 24-44; that stretch reads ILLFEIYATTLLLGSIYSIYV. Residues 45–58 are Lumenal-facing; that stretch reads DKWSITSYFGNSKN. Residues 59 to 79 form a helical membrane-spanning segment; that stretch reads LINLIFVKRGWFWTSLVYFYH. Residues 80 to 95 are Cytoplasmic-facing; that stretch reads AWDQKRNKIDFKFISR. The chain crosses the membrane as a helical span at residues 96–116; sequence YIVATLWWMFVTQWFIGPGLI. Residues 117-160 are Lumenal-facing; that stretch reads DRTFALSGGSCKNFDGDSSVFIPLTASTCKGLNGSWSGGHDLSG. Asn-149 carries an N-linked (GlcNAc...) asparagine glycan. His-161 is a catalytic residue. A helical transmembrane segment spans residues 161-181; the sequence is HVFLLTHSSLFMLSENFSFIL. Residues 182–191 are Cytoplasmic-facing; sequence NNGIKATSTK. The chain crosses the membrane as a helical span at residues 192-212; that stretch reads VLFGLLGLWWWMLFVTASFYH. Residue His-212 is part of the active site. Residue Thr-213 is a topological domain, lumenal. Residues 214 to 234 form a helical membrane-spanning segment; the sequence is TFEKCTGFFSGILEWSIVYVF. Topologically, residues 235–250 are cytoplasmic; the sequence is SSRMPAVADLLGSSDY.

It belongs to the FIT family. Fungal FIT2B/SCS3 subfamily.

It localises to the endoplasmic reticulum membrane. The catalysed reaction is an acyl-CoA + H2O = an acyl-4'-phosphopantetheine + adenosine 3',5'-bisphosphate + 2 H(+). The enzyme catalyses (9Z)-octadecenoyl-CoA + H2O = S-(9Z-octadecenoyl)-4'-phosphopantetheine + adenosine 3',5'-bisphosphate + 2 H(+). It carries out the reaction (5Z,8Z,11Z,14Z)-eicosatetraenoyl-CoA + H2O = S-(5Z,8Z,11Z,14Z-eicosatetraenoyl)-4'-phosphopantetheine + adenosine 3',5'-bisphosphate + 2 H(+). It catalyses the reaction hexadecanoyl-CoA + H2O = S-hexadecanoyl-4'-phosphopantetheine + adenosine 3',5'-bisphosphate + 2 H(+). Functionally, fatty acyl-coenzyme A (CoA) diphosphatase that hydrolyzes fatty acyl-CoA to yield acyl-4'-phosphopantetheine and adenosine 3',5'-bisphosphate. Preferentially hydrolyzes unsaturated long-chain acyl-CoA substrates in the endoplasmic reticulum (ER) lumen. This catalytic activity is required for maintaining ER structure and for lipid droplets (LDs) biogenesis, which are lipid storage organelles involved in maintaining lipid and energy homeostasis. May directly bind to diacylglycerol (DAGs) and triacylglycerol, which is also important for LD biogenesis. May support directional budding of nacent LDs from the ER into the cytosol by reducing DAG levels at sites of LD formation. May play a role in the regulation of cell morphology and cytoskeletal organization. The polypeptide is Acyl-coenzyme A diphosphatase fit1 (Schizosaccharomyces pombe (strain 972 / ATCC 24843) (Fission yeast)).